We begin with the raw amino-acid sequence, 232 residues long: Probable proteasome subunit alpha type-5 (232 aa).

The protein belongs to the peptidase T1A family. As to quaternary structure, the 26S proteasome consists of a 20S proteasome core and two 19S regulatory subunits. The 20S proteasome core is composed of 28 subunits that are arranged in four stacked rings, resulting in a barrel-shaped structure. The two end rings are each formed by seven alpha subunits, and the two central rings are each formed by seven beta subunits. The catalytic chamber with the active sites is on the inside of the barrel.

The protein resides in the cytoplasm. Its subcellular location is the nucleus. Its function is as follows. The proteasome degrades poly-ubiquitinated proteins in the cytoplasm and in the nucleus. It is essential for the regulated turnover of proteins and for the removal of misfolded proteins. The proteasome is a multicatalytic proteinase complex that is characterized by its ability to cleave peptides with Arg, Phe, Tyr, Leu, and Glu adjacent to the leaving group at neutral or slightly basic pH. It has an ATP-dependent proteolytic activity. In Encephalitozoon cuniculi (strain GB-M1) (Microsporidian parasite), this protein is Probable proteasome subunit alpha type-5 (PUP2).